Consider the following 166-residue polypeptide: 2-C-methyl-D-erythritol 2,4-cyclodiphosphate synthase (166 aa).

Residues aspartate 15 and histidine 17 each coordinate a divalent metal cation. 4-CDP-2-C-methyl-D-erythritol 2-phosphate-binding positions include aspartate 15 to histidine 17 and histidine 43 to serine 44. Histidine 51 serves as a coordination point for a divalent metal cation. Residues aspartate 65–glycine 67, threonine 141–glutamate 144, and arginine 151 contribute to the 4-CDP-2-C-methyl-D-erythritol 2-phosphate site.

It belongs to the IspF family. As to quaternary structure, homotrimer. Requires a divalent metal cation as cofactor.

It carries out the reaction 4-CDP-2-C-methyl-D-erythritol 2-phosphate = 2-C-methyl-D-erythritol 2,4-cyclic diphosphate + CMP. Its pathway is isoprenoid biosynthesis; isopentenyl diphosphate biosynthesis via DXP pathway; isopentenyl diphosphate from 1-deoxy-D-xylulose 5-phosphate: step 4/6. Involved in the biosynthesis of isopentenyl diphosphate (IPP) and dimethylallyl diphosphate (DMAPP), two major building blocks of isoprenoid compounds. Catalyzes the conversion of 4-diphosphocytidyl-2-C-methyl-D-erythritol 2-phosphate (CDP-ME2P) to 2-C-methyl-D-erythritol 2,4-cyclodiphosphate (ME-CPP) with a corresponding release of cytidine 5-monophosphate (CMP). The chain is 2-C-methyl-D-erythritol 2,4-cyclodiphosphate synthase from Prochlorococcus marinus (strain MIT 9215).